Reading from the N-terminus, the 235-residue chain is Thaumatin I (235 aa).

The signal sequence occupies residues 1-22 (MAATTCFFFLFPFLLLLTLSRA). Cystine bridges form between Cys-31/Cys-226, Cys-78/Cys-88, Cys-93/Cys-99, Cys-143/Cys-215, Cys-148/Cys-199, Cys-156/Cys-167, Cys-171/Cys-180, and Cys-181/Cys-186. Residues 230-235 (LELEDE) constitute a propeptide, removed in mature form.

The protein belongs to the thaumatin family.

The protein resides in the cytoplasmic vesicle. Its function is as follows. Taste-modifying protein; intensely sweet-tasting. It is 100000 times sweeter than sucrose on a molar basis. The sequence is that of Thaumatin I from Thaumatococcus daniellii (Katemfe).